A 62-amino-acid polypeptide reads, in one-letter code: Agnoprotein (62 aa).

Over 1-23 (MVLRRLSRQASVKVRRSWTESKK) the chain is Cytoplasmic. A helical; Signal-anchor for type II membrane protein membrane pass occupies residues 24–40 (TAQRLFVFVLELLLQFC). At 41–62 (EGEDTVDGKRKKPERLTEKPES) the chain is on the extracellular side.

This sequence belongs to the polyomaviruses agnoprotein family. In terms of assembly, homooligomer. Interacts with VP1. Interacts with large T antigen; this interaction may impact upon the activity of T-antigen on the control of viral gene transcription and replication. Interacts with small t antigen. Interacts with host CBX5; this interaction induces the dissociation of CBX5 from LBR, resulting in destabilization of the nuclear envelope. Phosphorylated by host kinase. Phosphorylation segregates agnoprotein in cytoplasm, whereas unphosphorylated agnoprotein migrate to the nucleus.

Its subcellular location is the host cytoplasm. The protein resides in the host nucleus membrane. It is found in the host rough endoplasmic reticulum membrane. It localises to the host cell membrane. In terms of biological role, alters the structure of the nuclear envelope by interacting with host CBX5 and disrupting CBX5 association with LBR. Involved in the perinuclear-nuclear localization of the capsid protein VP1 during virion assembly and maturation. Plays an important role in the release of progeny virions from infected cells and in viral propagation, probably by acting as a viral ionic channel in the host plasma membrane. Allows influx of extracellular calcium ions in the host cell. May contribute to viral genome transcription and translation of viral late proteins. This chain is Agnoprotein, found in Simian virus 40 (SV40).